We begin with the raw amino-acid sequence, 237 residues long: Phosphatidylserine decarboxylase proenzyme (237 aa).

The active-site Schiff-base intermediate with substrate; via pyruvic acid is Ser206. Ser206 bears the Pyruvic acid (Ser); by autocatalysis mark.

This sequence belongs to the phosphatidylserine decarboxylase family. PSD-A subfamily. In terms of assembly, heterodimer of a large membrane-associated beta subunit and a small pyruvoyl-containing alpha subunit. Pyruvate serves as cofactor. In terms of processing, is synthesized initially as an inactive proenzyme. Formation of the active enzyme involves a self-maturation process in which the active site pyruvoyl group is generated from an internal serine residue via an autocatalytic post-translational modification. Two non-identical subunits are generated from the proenzyme in this reaction, and the pyruvate is formed at the N-terminus of the alpha chain, which is derived from the carboxyl end of the proenzyme. The post-translation cleavage follows an unusual pathway, termed non-hydrolytic serinolysis, in which the side chain hydroxyl group of the serine supplies its oxygen atom to form the C-terminus of the beta chain, while the remainder of the serine residue undergoes an oxidative deamination to produce ammonia and the pyruvoyl prosthetic group on the alpha chain.

It localises to the cell membrane. It catalyses the reaction a 1,2-diacyl-sn-glycero-3-phospho-L-serine + H(+) = a 1,2-diacyl-sn-glycero-3-phosphoethanolamine + CO2. It participates in phospholipid metabolism; phosphatidylethanolamine biosynthesis; phosphatidylethanolamine from CDP-diacylglycerol: step 2/2. Its function is as follows. Catalyzes the formation of phosphatidylethanolamine (PtdEtn) from phosphatidylserine (PtdSer). This chain is Phosphatidylserine decarboxylase proenzyme, found in Rhodococcus jostii (strain RHA1).